Reading from the N-terminus, the 326-residue chain is MQRHLISAADLTRDDAVLILDTAEEMARVADRPIKKLPTLRGRTVVNLFFEDSTRTRISFEAAEKRLSADVINFTAKGSSVSKGESLKDTAQTLEAMGVDAVVIRHSASGAPYRLATSGWIDAAVVNAGDGTHQHPTQALLDAFTMRRRLVGRDAGLGKDLDGRRITLVGDILHSRVARSNVDLLHTLGAEVTLVAPPTLLPVGVETWPCEVSYDLDSTLPKSDAVMLLRVQRERMNAAFFPTEREYSRRYGLDGDRMAKMPDHAIVMHPGPMVRGMEITAEVADSDRCTVVEQVTNGVSIRMAVLYLLLGGNEPAVSHARPIEEK.

Carbamoyl phosphate is bound by residues Arg55 and Thr56. Lys83 provides a ligand contact to L-aspartate. Arg105, His135, and Gln138 together coordinate carbamoyl phosphate. Residues Arg176 and Arg230 each contribute to the L-aspartate site. Carbamoyl phosphate is bound by residues Gly271 and Pro272.

Belongs to the aspartate/ornithine carbamoyltransferase superfamily. ATCase family. Heterododecamer (2C3:3R2) of six catalytic PyrB chains organized as two trimers (C3), and six regulatory PyrI chains organized as three dimers (R2).

The catalysed reaction is carbamoyl phosphate + L-aspartate = N-carbamoyl-L-aspartate + phosphate + H(+). It participates in pyrimidine metabolism; UMP biosynthesis via de novo pathway; (S)-dihydroorotate from bicarbonate: step 2/3. Catalyzes the condensation of carbamoyl phosphate and aspartate to form carbamoyl aspartate and inorganic phosphate, the committed step in the de novo pyrimidine nucleotide biosynthesis pathway. This Streptomyces coelicolor (strain ATCC BAA-471 / A3(2) / M145) protein is Aspartate carbamoyltransferase catalytic subunit.